A 136-amino-acid chain; its full sequence is Ubiquinol-cytochrome c reductase complex assembly factor 2 (136 aa).

The transit peptide at 1 to 13 (MAASRYRRFLKLC) directs the protein to the mitochondrion. A disordered region spans residues 114–136 (KFAPGSPEGKHTAWARALPRPRT).

Interacts with UQCC1. Forms a complex, named COMB/coordinator of mitochondrial CYTB biogenesis, composed of UQCC1, UQCC2, UQCC4, UQCC5 and UQCC6; stabilizes nascent cytochrome b/MT-CYB and promotes its membrane insertion. Forms a complex, named COMB/coordinator of mitochondrial CYTB biogenesis, composed of UQCC1, UQCC2, UQCC4, UQCC5 and UQCC6; stabilizes nascent cytochrome b/MT-CYB and promotes its membrane insertion. Forms a complex, named COMA, composed of UQCC1, UQCC2 and UQCC4; activates MT-CYB translation. Forms a complex, named COMC, composed of UQCC1, UQCC2; UQCC3 and UQCC4; mediates MT-CYB hemylation and association with the first nuclear-encoded CIII subunit UQCRQ.

It is found in the mitochondrion matrix. It localises to the mitochondrion nucleoid. The protein localises to the mitochondrion. The protein resides in the mitochondrion intermembrane space. Its subcellular location is the mitochondrion inner membrane. Functionally, required for the assembly of the ubiquinol-cytochrome c reductase complex (mitochondrial respiratory chain complex III or cytochrome b-c1 complex). Plays a role in the modulation of respiratory chain activities such as oxygen consumption and ATP production and via its modulation of the respiratory chain activity can regulate skeletal muscle differentiation and insulin secretion by pancreatic beta-cells. Involved in cytochrome b translation and/or stability. The protein is Ubiquinol-cytochrome c reductase complex assembly factor 2 (UQCC2) of Bos taurus (Bovine).